A 190-amino-acid polypeptide reads, in one-letter code: Xanthine phosphoribosyltransferase (190 aa).

Xanthine is bound by residues leucine 20 and asparagine 27. Residue 129–133 coordinates 5-phospho-alpha-D-ribose 1-diphosphate; it reads ASGSA. Position 157 (lysine 157) interacts with xanthine.

This sequence belongs to the purine/pyrimidine phosphoribosyltransferase family. Xpt subfamily. As to quaternary structure, homodimer.

Its subcellular location is the cytoplasm. It carries out the reaction XMP + diphosphate = xanthine + 5-phospho-alpha-D-ribose 1-diphosphate. It functions in the pathway purine metabolism; XMP biosynthesis via salvage pathway; XMP from xanthine: step 1/1. Converts the preformed base xanthine, a product of nucleic acid breakdown, to xanthosine 5'-monophosphate (XMP), so it can be reused for RNA or DNA synthesis. The protein is Xanthine phosphoribosyltransferase of Clostridium tetani (strain Massachusetts / E88).